A 1358-amino-acid chain; its full sequence is Mediator of RNA polymerase II transcription subunit 12 (1358 aa).

Belongs to the Mediator complex subunit 12 family. In terms of assembly, component of the SRB8-11 complex, which itself associates with the Mediator complex.

Its subcellular location is the nucleus. Component of the SRB8-11 complex. The SRB8-11 complex is a regulatory module of the Mediator complex which is itself involved in regulation of basal and activated RNA polymerase II-dependent transcription. The SRB8-11 complex may be involved in the transcriptional repression of a subset of genes regulated by Mediator. It may inhibit the association of the Mediator complex with RNA polymerase II to form the holoenzyme complex. The protein is Mediator of RNA polymerase II transcription subunit 12 (SRB8) of Candida glabrata (strain ATCC 2001 / BCRC 20586 / JCM 3761 / NBRC 0622 / NRRL Y-65 / CBS 138) (Yeast).